A 376-amino-acid polypeptide reads, in one-letter code: Queuine tRNA-ribosyltransferase (376 aa).

Aspartate 93 serves as the catalytic Proton acceptor. Substrate contacts are provided by residues 93–97 (DSGGF), aspartate 147, glutamine 190, and glycine 217. The RNA binding stretch occupies residues 248–254 (GVGKPDD). Catalysis depends on aspartate 267, which acts as the Nucleophile. Positions 305, 307, 310, and 336 each coordinate Zn(2+).

The protein belongs to the queuine tRNA-ribosyltransferase family. Homodimer. Within each dimer, one monomer is responsible for RNA recognition and catalysis, while the other monomer binds to the replacement base PreQ1. It depends on Zn(2+) as a cofactor.

It catalyses the reaction 7-aminomethyl-7-carbaguanine + guanosine(34) in tRNA = 7-aminomethyl-7-carbaguanosine(34) in tRNA + guanine. Its pathway is tRNA modification; tRNA-queuosine biosynthesis. In terms of biological role, catalyzes the base-exchange of a guanine (G) residue with the queuine precursor 7-aminomethyl-7-deazaguanine (PreQ1) at position 34 (anticodon wobble position) in tRNAs with GU(N) anticodons (tRNA-Asp, -Asn, -His and -Tyr). Catalysis occurs through a double-displacement mechanism. The nucleophile active site attacks the C1' of nucleotide 34 to detach the guanine base from the RNA, forming a covalent enzyme-RNA intermediate. The proton acceptor active site deprotonates the incoming PreQ1, allowing a nucleophilic attack on the C1' of the ribose to form the product. After dissociation, two additional enzymatic reactions on the tRNA convert PreQ1 to queuine (Q), resulting in the hypermodified nucleoside queuosine (7-(((4,5-cis-dihydroxy-2-cyclopenten-1-yl)amino)methyl)-7-deazaguanosine). This Ruegeria pomeroyi (strain ATCC 700808 / DSM 15171 / DSS-3) (Silicibacter pomeroyi) protein is Queuine tRNA-ribosyltransferase.